Here is a 714-residue protein sequence, read N- to C-terminus: Polyribonucleotide nucleotidyltransferase (714 aa).

The Mg(2+) site is built by aspartate 489 and aspartate 495. The region spanning 556–615 (PKIDTIKIDVDKIKVVIGKGGETIDKIIAETGVKIDIDEEGNVSIYSSDQDAINRAKEII) is the KH domain. Residues 625–693 (GEVYHAKVVR…DKGRIDASMK (69 aa)) form the S1 motif domain. Positions 691–714 (SMKALVPRPPKPEKSEAKKEGKHD) are disordered. The segment covering 700-714 (PKPEKSEAKKEGKHD) has biased composition (basic and acidic residues).

It belongs to the polyribonucleotide nucleotidyltransferase family. The cofactor is Mg(2+).

The protein resides in the cytoplasm. It carries out the reaction RNA(n+1) + phosphate = RNA(n) + a ribonucleoside 5'-diphosphate. In terms of biological role, involved in mRNA degradation. Catalyzes the phosphorolysis of single-stranded polyribonucleotides processively in the 3'- to 5'-direction. In Streptococcus equi subsp. zooepidemicus (strain H70), this protein is Polyribonucleotide nucleotidyltransferase.